An 80-amino-acid polypeptide reads, in one-letter code: Protein FAM229B (80 aa).

Residues 1–45 (MPFRFGTQPRRFPVEGGDSSIELESGLSSSASCNGKETSPNRQLR) are disordered. The span at 15–32 (EGGDSSIELESGLSSSAS) shows a compositional bias: low complexity. A compositionally biased stretch (polar residues) spans 33 to 42 (CNGKETSPNR).

Belongs to the FAM229 family.

The chain is Protein FAM229B (Fam229b) from Rattus norvegicus (Rat).